Reading from the N-terminus, the 28-residue chain is M-poneritoxin-Dq4a (28 aa).

A28 bears the Alanine amide mark.

As to expression, expressed by the venom gland.

It is found in the secreted. Its function is as follows. The synthetic peptide has weak antimicrobial activity against Gram-negative bacterium E.coli ATCC 10536. It does not show antimicrobial activity against the Gram-positive bacteria B.amyloliquefacies S499, L.monocytogenes 2231 and S.aureus ATCC 29213, against the Gram-negative bacteria P.putida BTP1 and P.aeruginosa PaO1, or against the fungi S.cerevisiae, R.mucilaginosa, C.cucumerinum, F.oxysporum and B.cinerea. The sequence is that of M-poneritoxin-Dq4a from Dinoponera quadriceps (South American ant).